The sequence spans 216 residues: MTTEFETRSDEPRLNATEIRILGSLIEKQATSPETYPLTLNALVLACNQKTSREPVMNLTQGQVGQSLRALESRGFAKLVMGSRADRWEHKVDKALELVPAQLILTGLMFLRGPQTVNELLTRSGRMHEFEDAEQVVHQLERLIARELAVLIPRQAGQREDRYTHALGDPADIEAIIAARQNPSDRGAASGVSVERIEELEARIAALEERLARLEE.

This sequence belongs to the UPF0502 family.

The sequence is that of UPF0502 protein Pfl01_3711 from Pseudomonas fluorescens (strain Pf0-1).